A 659-amino-acid chain; its full sequence is tRNA uridine 5-carboxymethylaminomethyl modification enzyme MnmG (659 aa).

13 to 18 (GGGHAG) serves as a coordination point for FAD. Residue 281 to 295 (GPRYCPSVEDKINRF) coordinates NAD(+).

It belongs to the MnmG family. Homodimer. Heterotetramer of two MnmE and two MnmG subunits. The cofactor is FAD.

Its subcellular location is the cytoplasm. Its function is as follows. NAD-binding protein involved in the addition of a carboxymethylaminomethyl (cmnm) group at the wobble position (U34) of certain tRNAs, forming tRNA-cmnm(5)s(2)U34. This Delftia acidovorans (strain DSM 14801 / SPH-1) protein is tRNA uridine 5-carboxymethylaminomethyl modification enzyme MnmG.